Consider the following 391-residue polypeptide: MSDGNVAWILASTALVMLMVPGVGFFYAGMVRRKNAVNMIALSFISLIITVLLWIFYGYSVSFGNDISGIIGGLNYALLSGVKGEDLLFMMYQMMFAAVTIAILTSAIAERAKVSSFILLSALWLTFVYAPFAHWLWGGGWLAKLGALDFAGGMVVHISSGFAALAVAMTIGKRAGFEEYSIEPHSIPLTLIGAALLWFGWFGFNGGSALAANDVAINAVVVTNTSAAVAGFVWMVIGWIKGKPGSLGIVSGAIAGLAAITPAAGFVDVKGAIVIGLVAGIVCYLAMDFRIKKKIDESLDAWAIHGIGGLWGSVAVGILANPEVNGYAGLLFGNPQLLVSQLIAVASTTAYAFLVTLILAKAVDAAVGLRVSSQEEYVGLDLSQHEEVAYT.

Over 1 to 7 (MSDGNVA) the chain is Extracellular. Residues 8-27 (WILASTALVMLMVPGVGFFY) form a helical membrane-spanning segment. Residues 28–38 (AGMVRRKNAVN) are Cytoplasmic-facing. A helical transmembrane segment spans residues 39–57 (MIALSFISLIITVLLWIFY). The Extracellular portion of the chain corresponds to 58-89 (GYSVSFGNDISGIIGGLNYALLSGVKGEDLLF). A helical membrane pass occupies residues 90–106 (MMYQMMFAAVTIAILTS). Residues 107-113 (AIAERAK) are Cytoplasmic-facing. The helical transmembrane segment at 114–137 (VSSFILLSALWLTFVYAPFAHWLW) threads the bilayer. Over 138–152 (GGGWLAKLGALDFAG) the chain is Extracellular. Residues 153–170 (GMVVHISSGFAALAVAMT) form a helical membrane-spanning segment. The Cytoplasmic portion of the chain corresponds to 171–188 (IGKRAGFEEYSIEPHSIP). The helical transmembrane segment at 189 to 208 (LTLIGAALLWFGWFGFNGGS) threads the bilayer. Over 209–217 (ALAANDVAI) the chain is Extracellular. A helical transmembrane segment spans residues 218–237 (NAVVVTNTSAAVAGFVWMVI). Topologically, residues 238-245 (GWIKGKPG) are cytoplasmic. A helical transmembrane segment spans residues 246-263 (SLGIVSGAIAGLAAITPA). Topologically, residues 264 to 268 (AGFVD) are extracellular. The helical transmembrane segment at 269–287 (VKGAIVIGLVAGIVCYLAM) threads the bilayer. Topologically, residues 288 to 300 (DFRIKKKIDESLD) are cytoplasmic. Residues 301 to 319 (AWAIHGIGGLWGSVAVGIL) traverse the membrane as a helical segment. Residues 320 to 337 (ANPEVNGYAGLLFGNPQL) lie on the Extracellular side of the membrane. A helical membrane pass occupies residues 338-363 (LVSQLIAVASTTAYAFLVTLILAKAV). Residues 364 to 391 (DAAVGLRVSSQEEYVGLDLSQHEEVAYT) are Cytoplasmic-facing.

This sequence belongs to the ammonia transporter channel (TC 1.A.11.2) family. In terms of assembly, homotrimer.

The protein localises to the cell membrane. Functionally, involved in the uptake of ammonium/ammonia (NH(4)(+)/NH(3)). Transport is electrogenic. Transport the ammonium and methylammonium cation with high specificity. The chain is Ammonium transporter Amt1 from Archaeoglobus fulgidus (strain ATCC 49558 / DSM 4304 / JCM 9628 / NBRC 100126 / VC-16).